The primary structure comprises 365 residues: Neutral protease 2 homolog mep20 (365 aa).

The N-terminal stretch at 1–19 (MKVTILASAILALINGALA) is a signal peptide. A propeptide spanning residues 20–172 (LPANTPTLDV…PQAIKLLDRR (153 aa)) is cleaved from the precursor. N73 carries N-linked (GlcNAc...) asparagine glycosylation. 2 disulfides stabilise this stretch: C178–C249 and C256–C274. A Zn(2+)-binding site is contributed by H299. E300 is a catalytic residue. Zn(2+) contacts are provided by H303 and D314. N351 carries an N-linked (GlcNAc...) asparagine glycan.

This sequence belongs to the peptidase M35 family. The cofactor is Zn(2+).

The protein localises to the secreted. The catalysed reaction is Preferential cleavage of bonds with hydrophobic residues in P1'. Also 3-Asn-|-Gln-4 and 8-Gly-|-Ser-9 bonds in insulin B chain.. Secreted metalloproteinase that allows assimilation of proteinaceous substrates. Shows high activities on basic nuclear substrates such as histone and protamine. May be involved in virulence. In Aspergillus fumigatus (Neosartorya fumigata), this protein is Neutral protease 2 homolog mep20 (mep20).